Reading from the N-terminus, the 75-residue chain is Putative DNA-directed RNA polymerase subunit omega (75 aa).

It belongs to the RNA polymerase subunit omega family.

Its subcellular location is the plastid. It is found in the chloroplast. It catalyses the reaction RNA(n) + a ribonucleoside 5'-triphosphate = RNA(n+1) + diphosphate. May be involved in RNA polymerase activity. This chain is Putative DNA-directed RNA polymerase subunit omega (rpoZ), found in Porphyra purpurea (Red seaweed).